Reading from the N-terminus, the 444-residue chain is Proline--tRNA ligase (444 aa).

It belongs to the class-II aminoacyl-tRNA synthetase family. ProS type 2 subfamily. Homodimer.

The protein resides in the cytoplasm. The enzyme catalyses tRNA(Pro) + L-proline + ATP = L-prolyl-tRNA(Pro) + AMP + diphosphate. Catalyzes the attachment of proline to tRNA(Pro) in a two-step reaction: proline is first activated by ATP to form Pro-AMP and then transferred to the acceptor end of tRNA(Pro). In Maricaulis maris (strain MCS10) (Caulobacter maris), this protein is Proline--tRNA ligase.